The chain runs to 224 residues: UPF0111 protein TC_0063 (224 aa).

This sequence belongs to the UPF0111 family.

The chain is UPF0111 protein TC_0063 from Chlamydia muridarum (strain MoPn / Nigg).